The following is a 476-amino-acid chain: H2.0-like homeobox protein (476 aa).

Disordered regions lie at residues 121–170 (HLPQ…SSKD), 328–401 (WRHS…HQTT), and 413–476 (TASS…LAGL). The segment covering 158–168 (HHSGSAPAPSS) has biased composition (low complexity). The homeobox DNA-binding region spans 273–332 (RSWSRAVFSNLQRKGLEKRFEIQKYVTKPDRKQLAAMLGLTDAQVKVWFQNRRMKWRHSK). 2 stretches are compositionally biased toward basic and acidic residues: residues 331-346 (SKEA…EAGE) and 355-368 (EGER…RSEG). A compositionally biased stretch (acidic residues) spans 369-379 (EAESESSDSES). Over residues 386–397 (DTERTEGTERSL) the composition is skewed to basic and acidic residues. Positions 413–446 (TASSSASGSSFSFSSSSSLGSSNGSAGSASSLGS) are enriched in low complexity. The span at 455–464 (HQPSVTSGPQ) shows a compositional bias: polar residues.

Belongs to the H2.0 homeobox family.

It localises to the nucleus. Functionally, transcription factor required for TBX21/T-bet-dependent maturation of Th1 cells as well as maintenance of Th1-specific gene expression. Involved in embryogenesis and hematopoiesis. This is H2.0-like homeobox protein (Hlx) from Rattus norvegicus (Rat).